The following is a 61-amino-acid chain: Large ribosomal subunit protein uL30 (61 aa).

Belongs to the universal ribosomal protein uL30 family. As to quaternary structure, part of the 50S ribosomal subunit.

In Chromobacterium violaceum (strain ATCC 12472 / DSM 30191 / JCM 1249 / CCUG 213 / NBRC 12614 / NCIMB 9131 / NCTC 9757 / MK), this protein is Large ribosomal subunit protein uL30.